Here is a 512-residue protein sequence, read N- to C-terminus: NAD(P)H-quinone oxidoreductase chain 4, chloroplastic (512 aa).

14 helical membrane-spanning segments follow: residues 4–24 (VPWL…IPLL), 34–54 (WYAL…FGCY), 87–107 (IGLI…AWPV), 111–131 (PKLF…LFAS), 134–154 (ILLF…LLSM), 167–187 (FILY…TASL), 208–228 (GLEI…LPAF), 242–262 (HYST…YGFI), 274–294 (TVFA…AALV), 308–328 (SSVS…DLGL), 330–350 (GAML…FLAG), 374–396 (MFAM…GFVS), 417–437 (IITL…LSMV), and 462–482 (VFVL…PNFA).

This sequence belongs to the complex I subunit 4 family.

It localises to the plastid. The protein localises to the chloroplast thylakoid membrane. The catalysed reaction is a plastoquinone + NADH + (n+1) H(+)(in) = a plastoquinol + NAD(+) + n H(+)(out). The enzyme catalyses a plastoquinone + NADPH + (n+1) H(+)(in) = a plastoquinol + NADP(+) + n H(+)(out). This Zygnema circumcarinatum (Green alga) protein is NAD(P)H-quinone oxidoreductase chain 4, chloroplastic.